The chain runs to 162 residues: Probable chemoreceptor glutamine deamidase CheD 3 (162 aa).

The protein belongs to the CheD family.

The catalysed reaction is L-glutaminyl-[protein] + H2O = L-glutamyl-[protein] + NH4(+). Probably deamidates glutamine residues to glutamate on methyl-accepting chemotaxis receptors (MCPs), playing an important role in chemotaxis. The chain is Probable chemoreceptor glutamine deamidase CheD 3 from Geobacter sulfurreducens (strain ATCC 51573 / DSM 12127 / PCA).